A 1205-amino-acid polypeptide reads, in one-letter code: Plasma membrane calcium-transporting ATPase 4 (1205 aa).

The Cytoplasmic segment spans residues 1–100 (MTNPPGQSVS…KTFLELVWEA (100 aa)). The chain crosses the membrane as a helical span at residues 101 to 121 (LQDVTLIILEIAAIISLVLSF). At 122–147 (YRPPGGDNEICGHIASSPEEEEEGET) the chain is on the extracellular side. The chain crosses the membrane as a helical span at residues 148-168 (GWIEGAAILASVIIVVLVTAF). The Cytoplasmic portion of the chain corresponds to 169 to 369 (NDWSKEKQFR…LAVQIGKAGL (201 aa)). The interval 294-318 (DDDDKKKKGKKQGAPENRNKAKTQD) is disordered. 2 positions are modified to phosphoserine: Ser329 and Ser335. The chain crosses the membrane as a helical span at residues 370 to 390 (IMSVLTVVILILYFVVDNFVI). At 391–409 (QRREWLPECTPVYIQYFVK) the chain is on the extracellular side. A helical membrane pass occupies residues 410 to 430 (FFIIGVTVLVVAVPEGLPLAV). The Cytoplasmic portion of the chain corresponds to 431–844 (TISLAYSVKK…RNVYDSISKF (414 aa)). Asp466 (4-aspartylphosphate intermediate) is an active-site residue. Mg(2+)-binding residues include Asp786 and Asp790. A helical membrane pass occupies residues 845 to 865 (LQFQLTVNVVAVIVAFTGACI). The Extracellular portion of the chain corresponds to 866–872 (TQDSPLK). The chain crosses the membrane as a helical span at residues 873–893 (AVQMLWVNLIMDTFASLALAT). The Cytoplasmic segment spans residues 894-919 (EPPTESLLRRRPYGRNKPLISRTMMK). Residues 920 to 942 (NILGHAVYQLLIVFLLVFAGDTL) traverse the membrane as a helical segment. Residues 943–956 (FDIDSGRKAPLNSP) are Extracellular-facing. Residues 957–979 (PSQHYTIVFNTFVLMQLFNEINA) form a helical membrane-spanning segment. Over 980–995 (RKIHGEKNVFAGVYRN) the chain is Cytoplasmic. The helical transmembrane segment at 996–1016 (IIFCTVVLGTFFCQIMIVELG) threads the bilayer. Residues 1017–1029 (GKPFSCTSLTMEQ) are Extracellular-facing. A helical transmembrane segment spans residues 1030 to 1050 (WMWCLFIGIGELLWGQVISAI). Over 1051–1205 (PTKSLKFLKE…SPLPSLETPV (155 aa)) the chain is Cytoplasmic. Residues Ser1065 and Ser1071 each carry the phosphoserine modification. Omega-N-methylarginine is present on Arg1072. A calmodulin-binding subdomain A region spans residues 1087 to 1104 (LRRGQILWVRGLNRIQTQ). Phosphothreonine; by PKC is present on Thr1103. A calmodulin-binding subdomain B region spans residues 1105–1114 (IRVVKLFHNN). Ser1145 is subject to Phosphoserine.

Belongs to the cation transport ATPase (P-type) (TC 3.A.3) family. Type IIB subfamily. Interacts with PDZD11. Interacts with SLC35G1 and STIM1. Interacts with calmodulin. As to expression, specifically expressed by sperm in testis (at protein level).

Its subcellular location is the membrane. The protein localises to the cell projection. It localises to the cilium. The protein resides in the flagellum membrane. The catalysed reaction is Ca(2+)(in) + ATP + H2O = Ca(2+)(out) + ADP + phosphate + H(+). Activated by calcium/calmodulin. Functionally, calcium/calmodulin-regulated and magnesium-dependent enzyme that catalyzes the hydrolysis of ATP coupled with the transport of calcium out of the cell. By regulating sperm cell calcium homeostasis, may play a role in sperm motility. This chain is Plasma membrane calcium-transporting ATPase 4, found in Mus musculus (Mouse).